The chain runs to 487 residues: Probable cobyric acid synthase (487 aa).

Positions 246-431 constitute a GATase cobBQ-type domain; it reads LVRIAVIRLP…LHGLFMVPAA (186 aa). Cysteine 325 serves as the catalytic Nucleophile. Histidine 423 is a catalytic residue.

Belongs to the CobB/CobQ family. CobQ subfamily.

It functions in the pathway cofactor biosynthesis; adenosylcobalamin biosynthesis. Catalyzes amidations at positions B, D, E, and G on adenosylcobyrinic A,C-diamide. NH(2) groups are provided by glutamine, and one molecule of ATP is hydrogenolyzed for each amidation. This Methanosphaerula palustris (strain ATCC BAA-1556 / DSM 19958 / E1-9c) protein is Probable cobyric acid synthase.